The primary structure comprises 173 residues: Peptide deformylase (173 aa).

Fe cation-binding residues include Cys91 and His133. The active site involves Glu134. Residue His137 coordinates Fe cation.

It belongs to the polypeptide deformylase family. Fe(2+) is required as a cofactor.

It catalyses the reaction N-terminal N-formyl-L-methionyl-[peptide] + H2O = N-terminal L-methionyl-[peptide] + formate. Removes the formyl group from the N-terminal Met of newly synthesized proteins. Requires at least a dipeptide for an efficient rate of reaction. N-terminal L-methionine is a prerequisite for activity but the enzyme has broad specificity at other positions. The polypeptide is Peptide deformylase (Blochmanniella pennsylvanica (strain BPEN)).